The primary structure comprises 182 residues: CDP-diacylglycerol--glycerol-3-phosphate 3-phosphatidyltransferase (182 aa).

Over 2 to 12 the chain is Cytoplasmic; sequence QFNIPTLLTLF. The chain crosses the membrane as a helical span at residues 13 to 37; sequence RVILIPFFVVVFYLPFAWAPMVSAL. At 38–60 the chain is on the periplasmic side; that stretch reads IFCIAAITDWFDGFLARRWNQST. Residues 61-81 traverse the membrane as a helical segment; that stretch reads RFGAFLDPVADKVLVAIAMVL. Topologically, residues 82 to 86 are cytoplasmic; that stretch reads VTEHY. A helical membrane pass occupies residues 87-107; it reads HSWWVTLPAATMIAREIIISA. Residues 108-145 lie on the Periplasmic side of the membrane; that stretch reads LREWMAELGKRSSVAVSWIGKVKTTAQMVALAWLLWRP. A helical membrane pass occupies residues 146-168; that stretch reads NIWVEYAGIALFFVAAVLTLWSM. Over 169 to 181 the chain is Cytoplasmic; sequence LQYLSAARGDLLD.

It belongs to the CDP-alcohol phosphatidyltransferase class-I family.

The protein resides in the cell inner membrane. The catalysed reaction is a CDP-1,2-diacyl-sn-glycerol + sn-glycerol 3-phosphate = a 1,2-diacyl-sn-glycero-3-phospho-(1'-sn-glycero-3'-phosphate) + CMP + H(+). Its pathway is phospholipid metabolism; phosphatidylglycerol biosynthesis; phosphatidylglycerol from CDP-diacylglycerol: step 1/2. Functionally, catalyzes the conversion of cytidine diphosphate diacylglycerol (CDP-DG) and glycerol 3-phosphate into phosphatidylglycerol. Essential for the synthesis of anionic phospholipids, thereby playing a role in balancing the ratio of zwitterionic and anionic phospholipids, which is thought to be important for normal membrane function. The protein is CDP-diacylglycerol--glycerol-3-phosphate 3-phosphatidyltransferase of Salmonella paratyphi A (strain ATCC 9150 / SARB42).